The chain runs to 196 residues: Protein GrpE (196 aa).

The tract at residues 1 to 39 (MSSKEQKTPEGQAPEEIIMDQHEEIEAVEPEASAEQVDP) is disordered.

It belongs to the GrpE family. Homodimer.

Its subcellular location is the cytoplasm. Participates actively in the response to hyperosmotic and heat shock by preventing the aggregation of stress-denatured proteins, in association with DnaK and GrpE. It is the nucleotide exchange factor for DnaK and may function as a thermosensor. Unfolded proteins bind initially to DnaJ; upon interaction with the DnaJ-bound protein, DnaK hydrolyzes its bound ATP, resulting in the formation of a stable complex. GrpE releases ADP from DnaK; ATP binding to DnaK triggers the release of the substrate protein, thus completing the reaction cycle. Several rounds of ATP-dependent interactions between DnaJ, DnaK and GrpE are required for fully efficient folding. In Escherichia coli O139:H28 (strain E24377A / ETEC), this protein is Protein GrpE.